The following is a 348-amino-acid chain: ELAV-like protein 3 (348 aa).

3 RRM domains span residues 34-112 (TNLI…YARP), 120-200 (ANLY…FANN), and 265-343 (WCIF…FKTS).

This sequence belongs to the RRM elav family. Expression is neural-specific in both embryos and adults. Expressed from neurula stage onwards in primary motor-, inter- and sensory-neurons. Expressed in the closing neural tube and motor neurons of stage 18 embryos, and primarily in the ventricular zone and dorsal region of the tailbud and adult brain. Expressed from stage 26 onwards in the differentiating ganglion cell layer of the retina, extending to the inner nuclear layer at later stages.

Its function is as follows. RNA-binding protein that binds to AU-rich element (ARE) sequences of target mRNAs. May also bind poly-A tracts via RRM 3. May be involved in neuronal differentiation and maintenance. The protein is ELAV-like protein 3 (elavl3) of Xenopus laevis (African clawed frog).